The sequence spans 283 residues: Dihydropteroate synthase (283 aa).

The Pterin-binding domain occupies 18-274; sequence PKIMGIVNLT…DVKATADALK (257 aa). Asparagine 25 is a Mg(2+) binding site. (7,8-dihydropterin-6-yl)methyl diphosphate contacts are provided by residues threonine 66, aspartate 99, asparagine 119, aspartate 190, lysine 227, and 262-264; that span reads RVH.

This sequence belongs to the DHPS family. Homodimer. Mg(2+) serves as cofactor.

It carries out the reaction (7,8-dihydropterin-6-yl)methyl diphosphate + 4-aminobenzoate = 7,8-dihydropteroate + diphosphate. It participates in cofactor biosynthesis; tetrahydrofolate biosynthesis; 7,8-dihydrofolate from 2-amino-4-hydroxy-6-hydroxymethyl-7,8-dihydropteridine diphosphate and 4-aminobenzoate: step 1/2. In terms of biological role, catalyzes the condensation of para-aminobenzoate (pABA) with 6-hydroxymethyl-7,8-dihydropterin diphosphate (DHPt-PP) to form 7,8-dihydropteroate (H2Pte), the immediate precursor of folate derivatives. The protein is Dihydropteroate synthase (folP) of Neisseria meningitidis serogroup C.